A 295-amino-acid polypeptide reads, in one-letter code: Voltage-gated potassium channel (295 aa).

At 1–38 (MSVERWVFPGCSVMARFRRGLSDLGGRVRNIGDVMEHP) the chain is on the cytoplasmic side. The helical transmembrane segment at 39 to 63 (LVELGVSYAALLSVIVVVVEYTMQL) threads the bilayer. At 64–67 (SGEY) the chain is on the extracellular side. The chain crosses the membrane as a helical span at residues 68-92 (LVRLYLVDLILVIILWADYAYRAYK). Topologically, residues 93-96 (SGDP) are cytoplasmic. The segment at residues 97–105 (AGYVKKTLY) is an intramembrane region (helical). Over 106 to 108 (EIP) the chain is Extracellular. The chain crosses the membrane as a helical; Voltage-sensor span at residues 109-125 (ALVPAGLLALIEGHLAG). The Cytoplasmic portion of the chain corresponds to 126–128 (LGL). The chain crosses the membrane as a helical; Voltage-sensor span at residues 129 to 145 (FRLVRLLRFLRILLIIS). Topologically, residues 146 to 159 (RGSKFLSAIADAAD) are cytoplasmic. The helical transmembrane segment at 160 to 184 (KIRFYHLFGAVMLTVLYGAFAIYIV) threads the bilayer. Residues 185–195 (EYPDPNSSIKS) lie on the Extracellular side of the membrane. The segment at residues 196–208 (VFDALWWAVVTAT) is an intramembrane region (pore-forming). Residues 209–214 (TVGYGD) carry the Selectivity filter motif. Residues 209–221 (TVGYGDVVPATPI) lie on the Extracellular side of the membrane. A helical membrane pass occupies residues 222 to 253 (GKVIGIAVMLTGISALTLLIGTVSNMFQKILV). Residues 254-295 (GEPEPSCSPAKLAEMVSSMSEEEFEEFVRTLKNLRRLENSMK) are Cytoplasmic-facing.

This sequence belongs to the potassium channel family.

The protein resides in the cell membrane. In terms of biological role, mediates a strong voltage-dependent potassium ion permeability of excitable membranes. Assuming opened or closed conformations in response to the voltage difference across the membrane, the protein forms a potassium-selective channel through which potassium ions may pass in accordance with their electrochemical gradient. This is Voltage-gated potassium channel from Aeropyrum pernix (strain ATCC 700893 / DSM 11879 / JCM 9820 / NBRC 100138 / K1).